The sequence spans 284 residues: Stomatin (284 aa).

The Cytoplasmic segment spans residues 1 to 31; sequence MSDKRQSSHVQSQRIPESFRENSKTELGACG. Ser-18 is subject to Phosphoserine. Residue Cys-30 is the site of S-palmitoyl cysteine attachment. An intramembrane segment occupies 32 to 52; the sequence is WILVAASFFFVIITFPISIWI. At 53–284 the chain is on the cytoplasmic side; the sequence is CIKIVKEYER…MLQGIMGSNH (232 aa). Cys-87 carries the S-palmitoyl cysteine lipid modification. 2 positions are modified to phosphoserine: Ser-161 and Ser-244. Residues 265–273 form a required for homooligomerization region; sequence STIVFPLPV. The tract at residues 267–269 is required for lipid raft association; it reads IVF. Positions 273–284 are interaction with LANCL1; it reads VDMLQGIMGSNH.

It belongs to the band 7/mec-2 family. As to quaternary structure, interacts with LANCL1. Interacts with SLC2A1. Interacts with SLC4A1; this interaction positively regulates SLC4A1 activity. Identified in large complexes with SLC40A1, SLC14A1, SLC29A1 and AQP1. Homodimer and higher order homooligomers. The homodimer is banana-shaped. Interacts with ASIC1, ASIC2 and ASIC3. Interacts with STOML1; may redistribute STOM from the plasma membrane to late endosomes. As to expression, expressed in all sensory neurons of the dorsal root ganglia. In the CNS, expressed in many neurons of the spinal cord, medulla and pons. Expressed only in scattered neurons in the cortex, hippocampus, thalamus and basal ganglia. In the cerebellum, expressed in all Purkinje cells (at protein level). Widely expressed with high levels in heart, liver, skeletal muscle and testis and low levels in lung, brain and spleen.

It localises to the cell membrane. Its subcellular location is the cytoplasm. The protein resides in the cytoskeleton. It is found in the membrane raft. The protein localises to the melanosome. It localises to the cytoplasmic vesicle. Regulates ion channel activity and transmembrane ion transport. Regulates ASIC2 and ASIC3 channel activity. This Mus musculus (Mouse) protein is Stomatin.